Here is a 232-residue protein sequence, read N- to C-terminus: Thiamine import ATP-binding protein ThiQ (232 aa).

In terms of domain architecture, ABC transporter spans 2–230; sequence LKLTDITWLY…KGSASAIWGI (229 aa). 32-39 lines the ATP pocket; that stretch reads GPSGAGKS.

The protein belongs to the ABC transporter superfamily. Thiamine importer (TC 3.A.1.19.1) family. The complex is composed of two ATP-binding proteins (ThiQ), two transmembrane proteins (ThiP) and a solute-binding protein (ThiB).

The protein localises to the cell inner membrane. It catalyses the reaction thiamine(out) + ATP + H2O = thiamine(in) + ADP + phosphate + H(+). Its function is as follows. Part of the ABC transporter complex ThiBPQ involved in thiamine import. Responsible for energy coupling to the transport system. In Shigella flexneri, this protein is Thiamine import ATP-binding protein ThiQ.